The sequence spans 1358 residues: Insulin-like growth factor 1 receptor (1358 aa).

The first 25 residues, 1–25 (MKAELVPVCTAWILGLLLCLGPAAA), serve as a signal peptide directing secretion. Cys28 and Cys47 form a disulfide bridge. Residues Asn74, Asn99, and Asn132 are each glycosylated (N-linked (GlcNAc...) asparagine). Disulfide bonds link Cys147–Cys175, Cys179–Cys202, Cys189–Cys208, Cys212–Cys221, Cys216–Cys227, Cys228–Cys236, Cys232–Cys245, Cys248–Cys257, Cys261–Cys273, Cys279–Cys299, Cys303–Cys317, Cys320–Cys324, and Cys328–Cys347. N-linked (GlcNAc...) asparagine glycosylation is present at Asn241. N-linked (GlcNAc...) asparagine glycosylation occurs at Asn310. Asn411 and Asn432 each carry an N-linked (GlcNAc...) asparagine glycan. Cys449 and Cys482 form a disulfide bridge. 4 Fibronectin type-III domains span residues 483–603 (ESHV…TDAA), 604–702 (VPSI…TEAE), 727–818 (PRPN…FVFA), and 829–924 (IPGI…LKPD). Residues Asn488, Asn528, Asn616, Asn634, and Asn669 are each glycosylated (N-linked (GlcNAc...) asparagine). The disordered stretch occupies residues 670 to 691 (GTIDTEGGTEPTKPEGSVGEKG). Residues 735 to 934 (DVLAVGNSTV…VRNNILQMVV (200 aa)) lie on the Extracellular side of the membrane. N-linked (GlcNAc...) asparagine glycosylation is found at Asn741, Asn750, Asn758, Asn895, and Asn908. Residues 935–955 (AIPLALSFLLVGIISIVCFVF) form a helical membrane-spanning segment. Residues 956-1358 (KKRNSNRLGN…ALPLPQSSAC (403 aa)) lie on the Cytoplasmic side of the membrane. The residue at position 976 (Tyr976) is a Phosphotyrosine; by autocatalysis. In terms of domain architecture, Protein kinase spans 995–1270 (ITMNRELGQG…SIKDELDPGF (276 aa)). Residues 1001-1009 (LGQGSFGMV) and Lys1029 contribute to the ATP site. Asp1131 serves as the catalytic Proton acceptor. A phosphotyrosine; by autocatalysis mark is found at Tyr1157, Tyr1161, and Tyr1162. Positions 1336 to 1358 (PYAHMNGGRKNERALPLPQSSAC) are disordered.

This sequence belongs to the protein kinase superfamily. Tyr protein kinase family. Insulin receptor subfamily. As to quaternary structure, tetramer of 2 alpha and 2 beta chains linked by disulfide bonds. The alpha chains contribute to the formation of the ligand-binding domain, while the beta chain carries the kinase domain. Requires Mn(2+) as cofactor. The cytoplasmic domain of the beta subunit is autophosphorylated on Tyr residues in response to low concentrations of insulin-like growth factor (IGF1) and higher concentrations of insulin.

Its subcellular location is the cell membrane. It carries out the reaction L-tyrosyl-[protein] + ATP = O-phospho-L-tyrosyl-[protein] + ADP + H(+). Its activity is regulated as follows. Autophosphorylation activates the kinase activity. Functionally, this receptor binds insulin-like growth factor 1 (IGF1) with a high affinity and IGF2 with a lower affinity. It has a tyrosine-protein kinase activity, which is necessary for the activation of the IGF1-stimulated downstream signaling cascade. Plays a role in oocyte maturation. Promotes head development by inhibiting Wnt signaling during embryogenesis. The polypeptide is Insulin-like growth factor 1 receptor (igf1r) (Xenopus laevis (African clawed frog)).